The following is a 553-amino-acid chain: Glucagon-like peptide 2 receptor (553 aa).

The Extracellular portion of the chain corresponds to 1–173 (MKLGSSRAGP…SFKQNVDRYA (173 aa)). 3 cysteine pairs are disulfide-bonded: Cys83–Cys105, Cys96–Cys137, and Cys118–Cys159. N-linked (GlcNAc...) asparagine glycosylation is found at Asn97, Asn113, Asn148, and Asn162. A helical membrane pass occupies residues 174–198 (LLSTLQLMYTVGYSFSLISLFLALT). At 199–210 (LLLFLRKLHCTR) the chain is on the cytoplasmic side. A helical membrane pass occupies residues 211 to 235 (NYIHMNLFASFILRTLAVLVKDVVF). At 236 to 261 (YNSYSKRPDNENGWMSYLSEMSTSCR) the chain is on the extracellular side. A helical transmembrane segment spans residues 262–285 (SVQVLLHYFVGANYLWLLVEGLYL). Over 286 to 299 (HTLLEPTVLPERRL) the chain is Cytoplasmic. The helical transmembrane segment at 300–321 (WPRYLLLGWAFPVLFVVPWGFA) threads the bilayer. Over 322 to 339 (RAHLENTGCWTTNGNKKI) the chain is Extracellular. A helical transmembrane segment spans residues 340–362 (WWIIRGPMMLCVTVNFFIFLKIL). At 363–386 (KLLISKLKAHQMCFRDYKYRLAKS) the chain is on the cytoplasmic side. The helical transmembrane segment at 387-405 (TLVLIPLLGVHEILFSFIT) threads the bilayer. Over 406–417 (DDQVEGFAKLIR) the chain is Extracellular. A helical transmembrane segment spans residues 418–438 (LFIQLTLSSFHGFLVALQYGF). Topologically, residues 439–550 (ANGEVKAELR…ANTMEEILEE (112 aa)) are cytoplasmic.

It belongs to the G-protein coupled receptor 2 family.

The protein localises to the cell membrane. Functionally, this is a receptor for glucagon-like peptide 2. The activity of this receptor is mediated by G proteins which activate adenylyl cyclase. This is Glucagon-like peptide 2 receptor (GLP2R) from Homo sapiens (Human).